The following is a 154-amino-acid chain: Putative hydrogenase maturation protease MJ0253 (154 aa).

The protein belongs to the peptidase A31 family.

The protein is Putative hydrogenase maturation protease MJ0253 of Methanocaldococcus jannaschii (strain ATCC 43067 / DSM 2661 / JAL-1 / JCM 10045 / NBRC 100440) (Methanococcus jannaschii).